Consider the following 59-residue polypeptide: Conotoxin Cl14.4 (59 aa).

A signal peptide spans Met-1 to Thr-19. Positions Val-20 to Gly-36 are excised as a propeptide. Ile-58 is subject to Isoleucine amide.

In terms of processing, contains 2 disulfide bonds. In terms of tissue distribution, expressed by the venom duct.

It localises to the secreted. In Californiconus californicus (California cone), this protein is Conotoxin Cl14.4.